The following is a 445-amino-acid chain: E3 ubiquitin-protein ligase MYLIP (445 aa).

The 279-residue stretch at 1 to 279 folds into the FERM domain; that stretch reads MLCYVTRPDA…ETHAFYRCDT (279 aa). The segment at 341–363 is disordered; that stretch reads RNDQSPPSSPLKSSDSSMSCSSC. Residues 350–363 show a composition bias toward low complexity; the sequence is PLKSSDSSMSCSSC. Positions 360, 363, and 368 each coordinate Fe cation. The RING-type zinc finger occupies 387–422; that stretch reads CMVCCEEEINSTFCPCGHTVCCESCAAQLQSCPVCR. Residues 431–433 are critical for homodimerization; sequence VYL.

In terms of assembly, homodimer. Interacts with the E2 ubiquitin-conjugating enzyme, UBE2D1 (via RING-type zinc finger). Interacts with myosin regulatory light chain (MRLC) and TMEM4. In terms of processing, autoubiquitinated. Expressed in developing and adult brain, hippocampus, cerebellum, cerebral cortex, thalamus and substantia nigra. Predominantly found in neurons.

It localises to the cytoplasm. The protein localises to the cell membrane. The enzyme catalyses S-ubiquitinyl-[E2 ubiquitin-conjugating enzyme]-L-cysteine + [acceptor protein]-L-lysine = [E2 ubiquitin-conjugating enzyme]-L-cysteine + N(6)-ubiquitinyl-[acceptor protein]-L-lysine.. Its pathway is protein modification; protein ubiquitination. Can bind 1 iron ion per dimer. Iron binding seems to decrease LDLR degradation activity. Functionally, E3 ubiquitin-protein ligase that mediates ubiquitination and subsequent proteasomal degradation of myosin regulatory light chain (MRLC), LDLR, VLDLR and LRP8. Activity depends on E2 enzymes of the UBE2D family. Proteasomal degradation of MRLC leads to inhibit neurite outgrowth in presence of NGF by counteracting the stabilization of MRLC by saposin-like protein (CNPY2/MSAP) and reducing CNPY2-stimulated neurite outgrowth. Acts as a sterol-dependent inhibitor of cellular cholesterol uptake by mediating ubiquitination and subsequent degradation of LDLR. The chain is E3 ubiquitin-protein ligase MYLIP (Mylip) from Rattus norvegicus (Rat).